Reading from the N-terminus, the 117-residue chain is Putative iron-sulfur cluster insertion protein ErpA (117 aa).

The iron-sulfur cluster site is built by C45, C109, and C111.

This sequence belongs to the HesB/IscA family. Homodimer. The cofactor is iron-sulfur cluster.

In terms of biological role, required for insertion of 4Fe-4S clusters. The polypeptide is Putative iron-sulfur cluster insertion protein ErpA (Methylobacillus flagellatus (strain ATCC 51484 / DSM 6875 / VKM B-1610 / KT)).